Here is a 96-residue protein sequence, read N- to C-terminus: DNA-Binding protein G5P (96 aa).

Belongs to the inovirus G5P protein family. As to quaternary structure, homodimer.

Binds to DNA in a highly cooperative manner without pronounced sequence specificity. During synthesis of the single-stranded (progeny) viral DNA, prevents the conversion into the double-stranded replicative form. G5P is displaced by the capsid protein G8P during phage assembly on the inner bacterial membrane. The sequence is that of DNA-Binding protein G5P (V) from Escherichia coli (Bacteriophage If1).